Reading from the N-terminus, the 231-residue chain is 5'-methylthioadenosine/S-adenosylhomocysteine nucleosidase (231 aa).

The active-site Proton acceptor is E12. Substrate contacts are provided by residues G78, M153, and 174–175; that span reads ME. D198 serves as the catalytic Proton donor.

This sequence belongs to the PNP/UDP phosphorylase family. MtnN subfamily.

It catalyses the reaction S-adenosyl-L-homocysteine + H2O = S-(5-deoxy-D-ribos-5-yl)-L-homocysteine + adenine. The enzyme catalyses S-methyl-5'-thioadenosine + H2O = 5-(methylsulfanyl)-D-ribose + adenine. The catalysed reaction is 5'-deoxyadenosine + H2O = 5-deoxy-D-ribose + adenine. Its pathway is amino-acid biosynthesis; L-methionine biosynthesis via salvage pathway; S-methyl-5-thio-alpha-D-ribose 1-phosphate from S-methyl-5'-thioadenosine (hydrolase route): step 1/2. In terms of biological role, catalyzes the irreversible cleavage of the glycosidic bond in both 5'-methylthioadenosine (MTA) and S-adenosylhomocysteine (SAH/AdoHcy) to adenine and the corresponding thioribose, 5'-methylthioribose and S-ribosylhomocysteine, respectively. Also cleaves 5'-deoxyadenosine, a toxic by-product of radical S-adenosylmethionine (SAM) enzymes, into 5-deoxyribose and adenine. The polypeptide is 5'-methylthioadenosine/S-adenosylhomocysteine nucleosidase (Bacillus pumilus (strain SAFR-032)).